The primary structure comprises 243 residues: Urease accessory protein UreF (243 aa).

The protein belongs to the UreF family. As to quaternary structure, ureD, UreF and UreG form a complex that acts as a GTP-hydrolysis-dependent molecular chaperone, activating the urease apoprotein by helping to assemble the nickel containing metallocenter of UreC. The UreE protein probably delivers the nickel.

It is found in the cytoplasm. Required for maturation of urease via the functional incorporation of the urease nickel metallocenter. The chain is Urease accessory protein UreF from Xanthobacter autotrophicus (strain ATCC BAA-1158 / Py2).